Reading from the N-terminus, the 197-residue chain is Imidazoleglycerol-phosphate dehydratase (197 aa).

Belongs to the imidazoleglycerol-phosphate dehydratase family.

The protein resides in the cytoplasm. It catalyses the reaction D-erythro-1-(imidazol-4-yl)glycerol 3-phosphate = 3-(imidazol-4-yl)-2-oxopropyl phosphate + H2O. It functions in the pathway amino-acid biosynthesis; L-histidine biosynthesis; L-histidine from 5-phospho-alpha-D-ribose 1-diphosphate: step 6/9. This chain is Imidazoleglycerol-phosphate dehydratase, found in Methanocaldococcus jannaschii (strain ATCC 43067 / DSM 2661 / JAL-1 / JCM 10045 / NBRC 100440) (Methanococcus jannaschii).